The sequence spans 64 residues: Peptide Ctri9677 (64 aa).

The signal sequence occupies residues 1-22 (MKNNTILFTFLIVFLIASQIEA). A Leucine amide modification is found at Leu-36. The propeptide occupies 40-64 (SEDREFFDFFTDDNLAALEKALKEY).

This sequence belongs to the non-disulfide-bridged peptide (NDBP) superfamily. Short antimicrobial peptide (group 4) family. As to expression, expressed by the venom gland.

Its subcellular location is the secreted. Functionally, antimicrobial peptide. This is Peptide Ctri9677 from Chaerilus tricostatus (Scorpion).